An 83-amino-acid polypeptide reads, in one-letter code: Prolactin-releasing peptide (83 aa).

The signal sequence occupies residues 1-21 (MALKTWLLCLLLLSLVLPGAS). Phe-52 bears the Phenylalanine amide mark. Residues 57 to 83 (ATPRDVTGLGQLSCLPLDGRTKFSQRG) constitute a propeptide that is removed on maturation.

Widely expressed, with highest levels in medulla oblongata and hypothalamus.

It is found in the secreted. Its function is as follows. Stimulates prolactin (PRL) release and regulates the expression of prolactin through its receptor GPR10. May stimulate lactotrophs directly to secrete PRL. The sequence is that of Prolactin-releasing peptide (Prlh) from Rattus norvegicus (Rat).